A 598-amino-acid polypeptide reads, in one-letter code: MLKTHSCALTQENVGTEVTLAGWVHRRRDHGGVIFIDLRDREGIVQVVFNPEQSAACLDIGKELRSEYVLQVKGVVSHRPAGTENNRMPSGMVEVVAVHAKILNAAKTPPFYINEEVEVDESLRLKYRYLDIRRQGMKNNLIIRHKAVRFMREFLNDQGFIEIETPILIKSTPEGARDYLVPSRLFPGKFFALPQSPQQLKQLLMVAGMEKYYQVARCFRDEDLRADRQPEFTQLDMEMSFVDEEDMMKLMEDLFTGLVANVRPDMKYNKKFPRISFADATEKYGCDKPDLRFGMELADITDIGASSAFGVFKNVAAQGGAIKAISAPGCGGYNKSQQEELINLAKKYGAAGLVPISLGVENGELKDLTMEMVKSVAAKYLALEEIKTIAERSGAKPGDLILIVAGARKMVNTVLGEMRNQLAVKLNLCDKNELSFAFVVDFPLFQWDEEGKRWDSVHHPFTAPLESDMPLMDTDPGRVGSRAYDVVCNGYEIAGGSIRIHQADLQRKVFHLLGYNDEQIDERFGHLLEAFEFGAPPHGGVAPGIDRFVMLLAGETSIREVISFPKNQAAQDLLFGAPSVVDDKQIRDLHIRIQAEKE.

An L-aspartate-binding site is contributed by Glu174. An aspartate region spans residues 198 to 201; the sequence is QQLK. Arg220 is an L-aspartate binding site. Residues 220–222 and Gln229 contribute to the ATP site; that span reads RDE. Residue His458 coordinates L-aspartate. Glu492 provides a ligand contact to ATP. Arg499 provides a ligand contact to L-aspartate. 544-547 serves as a coordination point for ATP; it reads GIDR.

It belongs to the class-II aminoacyl-tRNA synthetase family. Type 1 subfamily. Homodimer.

Its subcellular location is the cytoplasm. It catalyses the reaction tRNA(Asx) + L-aspartate + ATP = L-aspartyl-tRNA(Asx) + AMP + diphosphate. In terms of biological role, aspartyl-tRNA synthetase with relaxed tRNA specificity since it is able to aspartylate not only its cognate tRNA(Asp) but also tRNA(Asn). Reaction proceeds in two steps: L-aspartate is first activated by ATP to form Asp-AMP and then transferred to the acceptor end of tRNA(Asp/Asn). In Dehalococcoides mccartyi (strain ATCC BAA-2100 / JCM 16839 / KCTC 5957 / BAV1), this protein is Aspartate--tRNA(Asp/Asn) ligase.